Consider the following 183-residue polypeptide: Tumor necrosis factor ligand superfamily member 4 (183 aa).

At 1-23 (MERVQPLEENVGNAARPRFERNK) the chain is on the cytoplasmic side. The chain crosses the membrane as a helical; Signal-anchor for type II membrane protein span at residues 24 to 50 (LLLVASVIQGLGLLLCFTYICLHFSAL). The THD domain maps to 51–173 (QVSHRYPRIQ…HVNGGELILI (123 aa)). Topologically, residues 51–183 (QVSHRYPRIQ…HQNPGEFCVL (133 aa)) are extracellular. N-linked (GlcNAc...) asparagine glycosylation is found at N90, N114, N152, and N157. C97 and C181 are joined by a disulfide.

The protein belongs to the tumor necrosis factor family. As to quaternary structure, homotrimer.

It localises to the membrane. Its function is as follows. Cytokine that binds to TNFRSF4. Co-stimulates T-cell proliferation and cytokine production. The polypeptide is Tumor necrosis factor ligand superfamily member 4 (TNFSF4) (Homo sapiens (Human)).